We begin with the raw amino-acid sequence, 114 residues long: Non-specific lipid-transfer protein 1 (114 aa).

The N-terminal stretch at M1 to E23 is a signal peptide. Disulfide bonds link C27/C73, C37/C50, C51/C96, and C71/C110.

Belongs to the plant LTP family.

Its function is as follows. Plant non-specific lipid-transfer proteins transfer phospholipids as well as galactolipids across membranes. May play a role in wax or cutin deposition in the cell walls of expanding epidermal cells and certain secretory tissues. The protein is Non-specific lipid-transfer protein 1 (LTP1) of Solanum pennellii (Tomato).